The primary structure comprises 93 residues: Phosphoribosyl-ATP pyrophosphatase (93 aa).

The protein belongs to the PRA-PH family.

Its subcellular location is the cytoplasm. It catalyses the reaction 1-(5-phospho-beta-D-ribosyl)-ATP + H2O = 1-(5-phospho-beta-D-ribosyl)-5'-AMP + diphosphate + H(+). It participates in amino-acid biosynthesis; L-histidine biosynthesis; L-histidine from 5-phospho-alpha-D-ribose 1-diphosphate: step 2/9. The chain is Phosphoribosyl-ATP pyrophosphatase from Mycolicibacterium vanbaalenii (strain DSM 7251 / JCM 13017 / BCRC 16820 / KCTC 9966 / NRRL B-24157 / PYR-1) (Mycobacterium vanbaalenii).